Here is a 367-residue protein sequence, read N- to C-terminus: 2-aminoethylphosphonate--pyruvate transaminase (367 aa).

Position 194 is an N6-(pyridoxal phosphate)lysine (Lys-194).

Belongs to the class-V pyridoxal-phosphate-dependent aminotransferase family. PhnW subfamily. In terms of assembly, homodimer. Requires pyridoxal 5'-phosphate as cofactor.

It catalyses the reaction (2-aminoethyl)phosphonate + pyruvate = phosphonoacetaldehyde + L-alanine. Functionally, involved in phosphonate degradation. The polypeptide is 2-aminoethylphosphonate--pyruvate transaminase (Klebsiella pneumoniae subsp. pneumoniae (strain ATCC 700721 / MGH 78578)).